The following is a 640-amino-acid chain: 1-deoxy-D-xylulose-5-phosphate synthase (640 aa).

Thiamine diphosphate contacts are provided by residues H79 and 120–122; that span reads GHS. D151 contacts Mg(2+). Thiamine diphosphate is bound by residues 152–153, N180, Y288, and E372; that span reads GG. N180 contributes to the Mg(2+) binding site.

The protein belongs to the transketolase family. DXPS subfamily. As to quaternary structure, homodimer. Mg(2+) is required as a cofactor. It depends on thiamine diphosphate as a cofactor.

It catalyses the reaction D-glyceraldehyde 3-phosphate + pyruvate + H(+) = 1-deoxy-D-xylulose 5-phosphate + CO2. The protein operates within metabolic intermediate biosynthesis; 1-deoxy-D-xylulose 5-phosphate biosynthesis; 1-deoxy-D-xylulose 5-phosphate from D-glyceraldehyde 3-phosphate and pyruvate: step 1/1. In terms of biological role, catalyzes the acyloin condensation reaction between C atoms 2 and 3 of pyruvate and glyceraldehyde 3-phosphate to yield 1-deoxy-D-xylulose-5-phosphate (DXP). The polypeptide is 1-deoxy-D-xylulose-5-phosphate synthase (Nitrosococcus oceani (strain ATCC 19707 / BCRC 17464 / JCM 30415 / NCIMB 11848 / C-107)).